The primary structure comprises 296 residues: Large ribosomal subunit protein uL15m (296 aa).

The N-terminal 21 residues, 1-21, are a transit peptide targeting the mitochondrion; sequence MAGPLQGGGARALDLLRGLPR. The tract at residues 22–66 is disordered; that stretch reads VSLANLKPNPGSKKPERRPRGRRRGRKCGRGHKGERQRGTRPRLG. A compositionally biased stretch (basic residues) spans 36–52; it reads PERRPRGRRRGRKCGRG.

The protein belongs to the universal ribosomal protein uL15 family. In terms of assembly, component of the mitochondrial large ribosomal subunit (mt-LSU). Mature mammalian 55S mitochondrial ribosomes consist of a small (28S) and a large (39S) subunit. The 28S small subunit contains a 12S ribosomal RNA (12S mt-rRNA) and 30 different proteins. The 39S large subunit contains a 16S rRNA (16S mt-rRNA), a copy of mitochondrial valine transfer RNA (mt-tRNA(Val)), which plays an integral structural role, and 52 different proteins.

It localises to the mitochondrion. This chain is Large ribosomal subunit protein uL15m (MRPL15), found in Homo sapiens (Human).